We begin with the raw amino-acid sequence, 570 residues long: Urease subunit alpha (570 aa).

The Urease domain occupies glycine 131–phenylalanine 570. Positions 136, 138, and 219 each coordinate Ni(2+). An N6-carboxylysine modification is found at lysine 219. Histidine 221 contributes to the substrate binding site. Ni(2+) is bound by residues histidine 248 and histidine 274. Histidine 322 functions as the Proton donor in the catalytic mechanism. Aspartate 362 is a binding site for Ni(2+).

Belongs to the metallo-dependent hydrolases superfamily. Urease alpha subunit family. As to quaternary structure, heterotrimer of UreA (gamma), UreB (beta) and UreC (alpha) subunits. Three heterotrimers associate to form the active enzyme. Ni cation serves as cofactor. In terms of processing, carboxylation allows a single lysine to coordinate two nickel ions.

The protein localises to the cytoplasm. It catalyses the reaction urea + 2 H2O + H(+) = hydrogencarbonate + 2 NH4(+). Its pathway is nitrogen metabolism; urea degradation; CO(2) and NH(3) from urea (urease route): step 1/1. This is Urease subunit alpha from Allorhizobium ampelinum (strain ATCC BAA-846 / DSM 112012 / S4) (Agrobacterium vitis (strain S4)).